The primary structure comprises 1019 residues: Alpha-mannosidase At3g26720 (1019 aa).

A signal peptide spans 1 to 22 (MAVKCFSLYLILAAIVIGGVTS). Residues His-47 and Asp-49 each contribute to the Zn(2+) site. N-linked (GlcNAc...) asparagine glycosylation occurs at Asn-64. Asp-169 contributes to the Zn(2+) binding site. Asn-278 and Asn-336 each carry an N-linked (GlcNAc...) asparagine glycan. His-410 contributes to the Zn(2+) binding site. Cys-466 and Cys-474 are disulfide-bonded. N-linked (GlcNAc...) asparagine glycans are attached at residues Asn-470, Asn-638, Asn-730, and Asn-820. Cys-824 and Cys-829 are joined by a disulfide.

Belongs to the glycosyl hydrolase 38 family. In terms of assembly, homodimer. Requires Zn(2+) as cofactor.

The enzyme catalyses Hydrolysis of terminal, non-reducing alpha-D-mannose residues in alpha-D-mannosides.. Its function is as follows. Liberates mannose from p-nitrophenyl-alpha-D-mannoside in vitro. The sequence is that of Alpha-mannosidase At3g26720 from Arabidopsis thaliana (Mouse-ear cress).